The following is a 287-amino-acid chain: Probable endonuclease 4 (287 aa).

Residues His69, His109, Glu144, Asp178, His181, His215, Asp228, His230, and Glu260 each contribute to the Zn(2+) site.

Belongs to the AP endonuclease 2 family. It depends on Zn(2+) as a cofactor.

The catalysed reaction is Endonucleolytic cleavage to 5'-phosphooligonucleotide end-products.. Functionally, endonuclease IV plays a role in DNA repair. It cleaves phosphodiester bonds at apurinic or apyrimidinic (AP) sites, generating a 3'-hydroxyl group and a 5'-terminal sugar phosphate. The sequence is that of Probable endonuclease 4 from Thermotoga sp. (strain RQ2).